Here is a 122-residue protein sequence, read N- to C-terminus: Large ribosomal subunit protein uL14 (122 aa).

The protein belongs to the universal ribosomal protein uL14 family. As to quaternary structure, part of the 50S ribosomal subunit. Forms a cluster with proteins L3 and L19. In the 70S ribosome, L14 and L19 interact and together make contacts with the 16S rRNA in bridges B5 and B8.

In terms of biological role, binds to 23S rRNA. Forms part of two intersubunit bridges in the 70S ribosome. This chain is Large ribosomal subunit protein uL14, found in Helicobacter hepaticus (strain ATCC 51449 / 3B1).